The primary structure comprises 445 residues: Gamma-glutamyl phosphate reductase (445 aa).

This sequence belongs to the gamma-glutamyl phosphate reductase family.

It localises to the cytoplasm. The enzyme catalyses L-glutamate 5-semialdehyde + phosphate + NADP(+) = L-glutamyl 5-phosphate + NADPH + H(+). The protein operates within amino-acid biosynthesis; L-proline biosynthesis; L-glutamate 5-semialdehyde from L-glutamate: step 2/2. Functionally, catalyzes the NADPH-dependent reduction of L-glutamate 5-phosphate into L-glutamate 5-semialdehyde and phosphate. The product spontaneously undergoes cyclization to form 1-pyrroline-5-carboxylate. In Persephonella marina (strain DSM 14350 / EX-H1), this protein is Gamma-glutamyl phosphate reductase.